The primary structure comprises 153 residues: Peritrophin-1 (153 aa).

The N-terminal stretch at 1–17 is a signal peptide; it reads MKVSASLVLLLAAAVLA. Chitin-binding type-2 domains are found at residues 18–79 and 92–153; these read DDRC…QCAP and SPNC…QCEE. 2 disulfides stabilise this stretch: cysteine 56-cysteine 69 and cysteine 130-cysteine 143. The N-linked (GlcNAc...) asparagine glycan is linked to asparagine 63.

Post-translationally, glycosylated. Adult peritrophic membrane.

Binds chitin but not cellulose. May be involved in the spatial organization of PM. This Anopheles gambiae (African malaria mosquito) protein is Peritrophin-1 (Aper1).